Consider the following 62-residue polypeptide: uncharacterized protein (62 aa).

This is an uncharacterized protein from Archaeoglobus fulgidus (strain ATCC 49558 / DSM 4304 / JCM 9628 / NBRC 100126 / VC-16).